The primary structure comprises 236 residues: Small ribosomal subunit protein uS3 (236 aa).

One can recognise a KH type-2 domain in the interval 39 to 107; that stretch reads IREFLTEELK…DTSLNIVEVR (69 aa). Residues 214-236 form a disordered region; that stretch reads ASERRAVEGDNQGSSSNRRRENA.

It belongs to the universal ribosomal protein uS3 family. Part of the 30S ribosomal subunit. Forms a tight complex with proteins S10 and S14.

Functionally, binds the lower part of the 30S subunit head. Binds mRNA in the 70S ribosome, positioning it for translation. The sequence is that of Small ribosomal subunit protein uS3 from Brucella canis (strain ATCC 23365 / NCTC 10854 / RM-666).